Reading from the N-terminus, the 325-residue chain is uncharacterized protein (325 aa).

The helical transmembrane segment at 67–87 (WIPFFLLFSSVVVLGGLWWLG) threads the bilayer.

It is found in the membrane. This is an uncharacterized protein from Synechocystis sp. (strain ATCC 27184 / PCC 6803 / Kazusa).